A 202-amino-acid chain; its full sequence is Casparian strip membrane protein 1 (202 aa).

Over 1–42 (MEKNKSTAIEIAESSKESKGKAPLLAAAVGHDRAAGYKRGVS) the chain is Cytoplasmic. The helical transmembrane segment at 43–63 (IFDLFLRISAATAALAATIVM) threads the bilayer. Residues 64 to 90 (GTTEQTLPFFTQFFQFRAQYDDLPTFT) are Extracellular-facing. A helical membrane pass occupies residues 91-111 (FFVVGMAIVTGYLILSVPFSI). Residues 112–130 (VCIARPVAIGPRFLLIVGD) lie on the Cytoplasmic side of the membrane. A helical membrane pass occupies residues 131–151 (TLKAVLATSAAGSSAAIVYLA). Residues 152–173 (HNGNSDANWLDICQQFNDFCQR) are Extracellular-facing. A helical membrane pass occupies residues 174 to 194 (VSGAVVAAFVAVVLLIFLIVL). The Cytoplasmic portion of the chain corresponds to 195 to 202 (SAMALRKN).

It belongs to the Casparian strip membrane proteins (CASP) family. As to quaternary structure, homodimer and heterodimers.

Its subcellular location is the cell membrane. Regulates membrane-cell wall junctions and localized cell wall deposition. Required for establishment of the Casparian strip membrane domain (CSD) and the subsequent formation of Casparian strips, a cell wall modification of the root endodermis that determines an apoplastic barrier between the intraorganismal apoplasm and the extraorganismal apoplasm and prevents lateral diffusion. The protein is Casparian strip membrane protein 1 of Striga hermonthica (Purple witchweed).